The following is a 200-amino-acid chain: Alpha/beta-tubulin-N-acetyltransferase 9 (200 aa).

One can recognise an N-acetyltransferase domain in the interval 34–181; that stretch reads ETLRELTASE…HEVTLERPIT (148 aa).

Belongs to the acetyltransferase family. GNAT subfamily. Interacts with microtubules as well as alpha/beta-tubulin heterodimers.

It is found in the nucleus. Its subcellular location is the cytoplasm. The protein localises to the cytoskeleton. The protein resides in the spindle. It localises to the spindle pole. It catalyses the reaction N-terminal L-methionyl-[tubulin] + acetyl-CoA = N-terminal N(alpha)-acetyl-L-methionyl-[tubulin] + CoA + H(+). In terms of biological role, N-acetyltransferase that mediates the acetylation of the N-terminal residues of alpha- and beta-tubulin. Required for microtubule stability and inhibition of JNK signaling to promote cell survival during development, possibly acting independently of its N-acetyltransferase activity. Necessary for the stabilization of spindle microtubules and for mitosis progression. Regulates microtubule stability by inhibiting Spastin-mediated depolymerization and promoting Eb1-mediated polymerization. The chain is Alpha/beta-tubulin-N-acetyltransferase 9 from Drosophila melanogaster (Fruit fly).